The following is a 367-amino-acid chain: Glutamate 5-kinase (367 aa).

ATP is bound at residue K9. Substrate is bound by residues S49, D136, and N148. Residues 168–169 (TD) and 210–216 (TGGMKSK) each bind ATP. The 75-residue stretch at 276–350 (SGQIEIDAGA…GMQSQHIQAR (75 aa)) folds into the PUA domain.

The protein belongs to the glutamate 5-kinase family.

Its subcellular location is the cytoplasm. The enzyme catalyses L-glutamate + ATP = L-glutamyl 5-phosphate + ADP. The protein operates within amino-acid biosynthesis; L-proline biosynthesis; L-glutamate 5-semialdehyde from L-glutamate: step 1/2. Its function is as follows. Catalyzes the transfer of a phosphate group to glutamate to form L-glutamate 5-phosphate. The chain is Glutamate 5-kinase from Bacillus cereus (strain ZK / E33L).